A 188-amino-acid polypeptide reads, in one-letter code: Ribosome-recycling factor (188 aa).

The protein belongs to the RRF family.

The protein localises to the cytoplasm. Responsible for the release of ribosomes from messenger RNA at the termination of protein biosynthesis. May increase the efficiency of translation by recycling ribosomes from one round of translation to another. The polypeptide is Ribosome-recycling factor (Acidiphilium cryptum (strain JF-5)).